The chain runs to 529 residues: Bifunctional purine biosynthesis protein PurH (529 aa).

The MGS-like domain occupies 1-148 (MQQRRPVRRA…KNHKDVAIVV (148 aa)).

The protein belongs to the PurH family.

The enzyme catalyses (6R)-10-formyltetrahydrofolate + 5-amino-1-(5-phospho-beta-D-ribosyl)imidazole-4-carboxamide = 5-formamido-1-(5-phospho-D-ribosyl)imidazole-4-carboxamide + (6S)-5,6,7,8-tetrahydrofolate. It carries out the reaction IMP + H2O = 5-formamido-1-(5-phospho-D-ribosyl)imidazole-4-carboxamide. It participates in purine metabolism; IMP biosynthesis via de novo pathway; 5-formamido-1-(5-phospho-D-ribosyl)imidazole-4-carboxamide from 5-amino-1-(5-phospho-D-ribosyl)imidazole-4-carboxamide (10-formyl THF route): step 1/1. Its pathway is purine metabolism; IMP biosynthesis via de novo pathway; IMP from 5-formamido-1-(5-phospho-D-ribosyl)imidazole-4-carboxamide: step 1/1. This Salmonella paratyphi B (strain ATCC BAA-1250 / SPB7) protein is Bifunctional purine biosynthesis protein PurH.